The primary structure comprises 983 residues: Importin beta-like protein kap113 (983 aa).

The Importin N-terminal domain maps to 24–96; it reads AEGHLNNWKK…RCNALLGSIK (73 aa).

It belongs to the importin beta family.

It localises to the nucleus. Functionally, functions as a component of the nuclear pore complex (NPC). NPC components, collectively referred to as nucleoporins (NUPs), can play the role of both NPC structural components and of docking or interaction partners for transiently associated nuclear transport factors. Active directional transport is assured by both, a Phe-Gly (FG) repeat affinity gradient for these transport factors across the NPC and a transport cofactor concentration gradient across the nuclear envelope. Involved in the export of mRNA from the nucleus to the cytoplasm. May play a role in mitotic spindle formation and/or function. The sequence is that of Importin beta-like protein kap113 (kap113) from Schizosaccharomyces pombe (strain 972 / ATCC 24843) (Fission yeast).